The chain runs to 336 residues: Alpha-N-acetylgalactosaminide alpha-2,6-sialyltransferase 5 (336 aa).

The Cytoplasmic portion of the chain corresponds to M1 to G8. The chain crosses the membrane as a helical; Signal-anchor for type II membrane protein span at residues L9–L29. Residues G30 to F336 lie on the Lumenal side of the membrane. Residues E34 to Q76 form a disordered region. Residues Q38–Q49 are compositionally biased toward low complexity. Polar residues predominate over residues A50–P66. An intrachain disulfide couples C96 to C245. 2 N-linked (GlcNAc...) asparagine glycosylation sites follow: N137 and N161.

This sequence belongs to the glycosyltransferase 29 family. High expression in forebrain and to a lesser extent in cerebellum. No expression in salivary gland, intestine, liver, kidney, heart, lung, thymus and spleen.

The protein resides in the golgi apparatus membrane. It carries out the reaction a ganglioside GM1b (d18:1(4E)) + CMP-N-acetyl-beta-neuraminate = a ganglioside GD1alpha (d18:1(4E)) + CMP + H(+). It catalyses the reaction N-acetyl-alpha-neuraminosyl-(2-&gt;3)-beta-D-galactosyl-(1-&gt;3)-N-acetyl-beta-D-glucosaminyl-(1-&gt;3)-beta-D-galactosyl-(1-&gt;4)-beta-D-glucosyl-(1&lt;-&gt;1')-N-acyl-sphing-4-enine + CMP-N-acetyl-beta-neuraminate = N-acetyl-alpha-neuraminosyl-(2-&gt;3)-beta-D-galactosyl-(1-&gt;3)-[N-acetyl-alpha-neuraminosyl-(2-&gt;6)]-N-acetyl-beta-D-glucosaminyl-(1-&gt;3)-beta-D-galactosyl-(1-&gt;4)-beta-D-glucosyl-(1&lt;-&gt;1')-N-acyl-sphing-4-enine + CMP + H(+). It functions in the pathway glycolipid biosynthesis. Functionally, predominantly catalyzes the biosynthesis of ganglioside GD1alpha from GM1b in the brain, by transferring the sialyl group (N-acetyl-alpha-neuraminyl or NeuAc) from CMP-NeuAc to the GalNAc residue on the NeuAc-alpha-2,3-Gal-beta-1,3-GalNAc sequence of GM1b. GD1alpha is a critical molecule in the communication and interaction between neuronal cells and their supportive cells, particularly in brain tissues, and functions as an adhesion molecule in the process of metastasis. Also shows activity towards sialyl Lc4Cer (N-acetyl-alpha-neuraminosyl-(2-&gt;3)-beta-D-galactosyl-(1-&gt;3)-N-acetyl-beta-D-glucosaminyl-(1-&gt;3)-beta-D-galactosyl-(1-&gt;4)-beta-D-glucosyl-(1&lt;-&gt;1')-N-acyl-sphing-4-enine) generating disialyl Lc4Cer, which can lead to the synthesis of disialyl Lewis a (Le(a)), suggested to be a cancer-associated antigen. This Mus musculus (Mouse) protein is Alpha-N-acetylgalactosaminide alpha-2,6-sialyltransferase 5 (St6galnac5).